We begin with the raw amino-acid sequence, 1941 residues long: Xin actin-binding repeat-containing protein 1 (1941 aa).

The interval methionine 1–leucine 41 is disordered. 27 Xin repeats span residues glycine 108–aspartate 123, glycine 143–asparagine 158, glycine 176–aspartate 191, glycine 215–aspartate 230, glycine 255–cysteine 270, asparagine 293–aspartate 308, proline 331–aspartate 346, alanine 368–aspartate 383, glycine 402–glutamate 417, glycine 439–glycine 454, glycine 475–aspartate 490, glycine 510–tyrosine 525, glycine 548–aspartate 563, glycine 586–aspartate 601, glycine 624–histidine 639, alanine 658–aspartate 673, valine 697–glycine 712, glycine 736–aspartate 751, glycine 769–aspartate 784, glycine 805–aspartate 820, alanine 842–tyrosine 857, glycine 880–aspartate 895, glycine 917–aspartate 932, glycine 951–glycine 966, glycine 982–aspartate 997, glycine 1020–aspartate 1035, and alanine 1055–aspartate 1070. The segment covering alanine 1514 to isoleucine 1565 has biased composition (polar residues). Disordered stretches follow at residues alanine 1514 to histidine 1568, alanine 1715 to alanine 1856, and tyrosine 1914 to glycine 1941. Residues serine 1820–serine 1833 are compositionally biased toward low complexity. The span at valine 1834–proline 1843 shows a compositional bias: pro residues.

Belongs to the Xin family. In terms of tissue distribution, expressed at intercalated disks in the heart (at protein level).

Its subcellular location is the cell junction. It localises to the adherens junction. The protein localises to the desmosome. Involved in cardiac morphogenesis, including heart midline formation, cardiac tubule looping, myocardial formation and maintenance of heart beat speed and rhythm. May protect actin filaments from depolymerization. May play a role in development of normal skeletal muscle morphology, muscle fiber type composition and regulation of muscle satellite cell activation and survival. The protein is Xin actin-binding repeat-containing protein 1 of Gallus gallus (Chicken).